The primary structure comprises 232 residues: Ribosomal RNA small subunit methyltransferase G (232 aa).

Residues Gly93, Leu98, 144 to 145 (VE), and Arg163 each bind S-adenosyl-L-methionine.

Belongs to the methyltransferase superfamily. RNA methyltransferase RsmG family.

The protein resides in the cytoplasm. It catalyses the reaction guanosine(527) in 16S rRNA + S-adenosyl-L-methionine = N(7)-methylguanosine(527) in 16S rRNA + S-adenosyl-L-homocysteine. In terms of biological role, specifically methylates the N7 position of guanine in position 527 of 16S rRNA. In Burkholderia pseudomallei (strain 1106a), this protein is Ribosomal RNA small subunit methyltransferase G.